The chain runs to 569 residues: MANSKKQAWFFYTTGLPSDIEIEVDDITFHLHKFPLMSKSKKLHQLITEQEQSKVYSHIKLENFPGGSEIFEMVIKISYGFKVDISVSTAVPLRCAAEYLEMTEEYSPENLISKTEKFLSEFVFTNVQESIKALKACESVSSLAESLCITEQCIDSIVFQASSTDPSSFYGWPINNGGIFTVDRKKQSKDSKTELWFEDLTELSFPIFRRVILSMKSSVLSPEIVERSLLTYAKKHIPGISRSSSASSSSSSSSTTIASENQQRELLETITSDLPLTATTTRSLFGLLRAAIILNASENCRKFLEKKIGSNLEKATLDDLLIPSYSYLNETLYDIDLVERLLRRFLENVAVSSSSLTVVGRLIDGVLGEIASDANLKPEQFYNLAVLLPVQARVYDDGLYRAVDIYFKTHSWILEEEKEKICSVMDCRKLTVEGCTHAAQNERLPLRAVVQVLFLEQLQLRQVITGTLLTEEDGDKTVVDLGRWKEAVKENQVLRLDMDTMRTRVNQLEKECLYLKKVIAKIDKESLLKAKHGAGKWSIGKKFGCKFSAQVCDSQEATMVDRRSRRFLS.

One can recognise a BTB domain in the interval S18–V87. The NPH3 domain occupies E194–Q459. The segment covering I240 to S259 has biased composition (low complexity). A disordered region spans residues I240–N261. Position 400 is a phosphotyrosine (Y400).

This sequence belongs to the NPH3 family.

The protein operates within protein modification; protein ubiquitination. May act as a substrate-specific adapter of an E3 ubiquitin-protein ligase complex (CUL3-RBX1-BTB) which mediates the ubiquitination and subsequent proteasomal degradation of target proteins. In Arabidopsis thaliana (Mouse-ear cress), this protein is BTB/POZ domain-containing protein At3g50840.